A 421-amino-acid polypeptide reads, in one-letter code: Atrochrysone carboxyl ACP thioesterase (421 aa).

Positions 207, 209, 211, and 212 each coordinate Zn(2+). Residue D211 is the Proton donor/acceptor of the active site.

The protein belongs to the metallo-beta-lactamase superfamily. Zn(2+) is required as a cofactor. Specifically expressed in conidia.

It carries out the reaction atrochrysone carboxyl-[ACP] + H2O = atrochrysone carboxylate + holo-[ACP] + H(+). It participates in secondary metabolite biosynthesis. Its function is as follows. Atrochrysone carboxyl ACP thioesterase; part of the gene cluster that mediates the biosynthesis of trypacidin, a mycotoxin with antiprotozoal activity and that plays a role in the infection process. The pathway begins with the synthesis of atrochrysone thioester by the polyketide synthase (PKS) tpcC. The atrochrysone carboxyl ACP thioesterase tpcB then breaks the thioester bond and releases the atrochrysone carboxylic acid from tpcC. The decarboxylase tpcK converts atrochrysone carboxylic acid to atrochrysone which is further reduced into emodin anthrone. The next step is performed by the emodin anthrone oxygenase tpcL that catalyzes the oxidation of emodin anthrone to emodin. Emodin O-methyltransferase encoded by tpcA catalyzes methylation of the 8-hydroxy group of emodin to form questin. Ring cleavage of questin by questin oxidase tpcI leads to desmethylsulochrin via several intermediates including questin epoxide. Another methylation step catalyzed by tpcM leads to the formation of sulochrin which is further converted to monomethylsulfochrin by tpcH. Finally, the tpcJ catalyzes the conversion of monomethylsulfochrin to trypacidin. Trypacidin is toxic for human pulmonary and bronchial epithelial cells by initiating the intracellular formation of nitric oxide (NO) and hydrogen peroxide (H(2)O(2)), thus triggering host necrotic cell death. The trypacidin pathway is also able to produce endocrocin via a distinct route from the endocrocin Enc pathway. The sequence is that of Atrochrysone carboxyl ACP thioesterase from Aspergillus fumigatus (strain ATCC MYA-4609 / CBS 101355 / FGSC A1100 / Af293) (Neosartorya fumigata).